A 173-amino-acid polypeptide reads, in one-letter code: Signal peptidase complex catalytic subunit sec11 (173 aa).

Over 1-15 the chain is Cytoplasmic; the sequence is MLGIADMQPRQLAAQ. A helical; Signal-anchor for type II membrane protein transmembrane segment spans residues 16-36; it reads ILNFALVLSTAFMMWKGLSVV. Residues 37 to 173 are Lumenal-facing; sequence SDSPSPIVVV…MGVMVVLQRE (137 aa). Residues S50, H89, and D115 each act as charge relay system in the active site. Positions 159-170 are C-terminal short (CTS) helix; sequence VMLGLMGVMVVL.

It belongs to the peptidase S26B family. Component of the signal peptidase complex (SPC) composed of a catalytic subunit SEC11 and three accessory subunits SPC1, SPC2 and SPC3. The complex induces a local thinning of the ER membrane which is used to measure the length of the signal peptide (SP) h-region of protein substrates. This ensures the selectivity of the complex towards h-regions shorter than 18-20 amino acids. SPC associates with the translocon complex.

It localises to the endoplasmic reticulum membrane. The enzyme catalyses Cleavage of hydrophobic, N-terminal signal or leader sequences from secreted and periplasmic proteins.. In terms of biological role, catalytic component of the signal peptidase complex (SPC) which catalyzes the cleavage of N-terminal signal sequences from nascent proteins as they are translocated into the lumen of the endoplasmic reticulum. Specifically cleaves N-terminal signal peptides that contain a hydrophobic alpha-helix (h-region) shorter than 18-20 amino acids. This is Signal peptidase complex catalytic subunit sec11 (sec11) from Pyrenophora tritici-repentis (strain Pt-1C-BFP) (Wheat tan spot fungus).